Here is a 395-residue protein sequence, read N- to C-terminus: ATP-dependent RNA helicase eIF4A (395 aa).

Residues 22–50 carry the Q motif motif; that stretch reads TSFDDLGLKDELLRGIYGYGFENPSSIQQ. The Helicase ATP-binding domain maps to 53-223; it reads ILPVIKGNDV…GKFMRDPVRI (171 aa). 66-73 contacts ATP; it reads AQSGTGKT. Positions 171 to 174 match the DEAD box motif; that stretch reads DEAD. Residues 234 to 395 form the Helicase C-terminal domain; the sequence is GIKQFYIDVE…EMPTNIADLI (162 aa).

It belongs to the DEAD box helicase family. eIF4A subfamily. In terms of assembly, component of the eIF4F complex, which composition varies with external and internal environmental conditions. It is composed of at least eIF4A, eIF4E and eIF4G.

The protein resides in the cytoplasm. It catalyses the reaction ATP + H2O = ADP + phosphate + H(+). In terms of biological role, ATP-dependent RNA helicase which is a subunit of the eIF4F complex involved in cap recognition and is required for mRNA binding to ribosome. In the current model of translation initiation, eIF4A unwinds RNA secondary structures in the 5'-UTR of mRNAs which is necessary to allow efficient binding of the small ribosomal subunit, and subsequent scanning for the initiator codon. The protein is ATP-dependent RNA helicase eIF4A (TIF1) of Yarrowia lipolytica (strain CLIB 122 / E 150) (Yeast).